Consider the following 155-residue polypeptide: Small ribosomal subunit protein uS7cz/uS7cy (155 aa).

Belongs to the universal ribosomal protein uS7 family. As to quaternary structure, part of the 30S ribosomal subunit.

Its subcellular location is the plastid. It localises to the chloroplast. Its function is as follows. One of the primary rRNA binding proteins, it binds directly to 16S rRNA where it nucleates assembly of the head domain of the 30S subunit. The chain is Small ribosomal subunit protein uS7cz/uS7cy (rps7-A) from Nymphaea alba (White water-lily).